The following is a 97-amino-acid chain: Protein E7 (97 aa).

Residues 1–44 (MHGKKPSVQDIVLDLKPTTETDLTCYESLDNSEDEDETDSHLER) are E7 terminal domain. Residues 23 to 27 (LTCYE) carry the LXCXE motif; interaction with host RB1 and TMEM173/STING motif. A zinc finger lies at 57–93 (CSRCQSTVCLTIESTHADLLVLEDLLMGALKIVCPNC). A Nuclear export signal motif is present at residues 75-83 (LLVLEDLLM).

The protein belongs to the papillomaviridae E7 protein family. In terms of assembly, homodimer. Homooligomer. Interacts with host RB1; this interaction induces dissociation of RB1-E2F1 complex thereby disrupting RB1 activity. Interacts with host EP300; this interaction represses EP300 transcriptional activity. Interacts with protein E2; this interaction inhibits E7 oncogenic activity. Interacts with host TMEM173/STING; this interaction impairs the ability of TMEM173/STING to sense cytosolic DNA and promote the production of type I interferon (IFN-alpha and IFN-beta). In terms of processing, highly phosphorylated.

Its subcellular location is the host cytoplasm. It is found in the host nucleus. In terms of biological role, plays a role in viral genome replication by driving entry of quiescent cells into the cell cycle. Stimulation of progression from G1 to S phase allows the virus to efficiently use the cellular DNA replicating machinery to achieve viral genome replication. E7 protein has both transforming and trans-activating activities. Induces the disassembly of the E2F1 transcription factor from RB1, with subsequent transcriptional activation of E2F1-regulated S-phase genes. Interferes with host histone deacetylation mediated by HDAC1 and HDAC2, leading to transcription activation. Also plays a role in the inhibition of both antiviral and antiproliferative functions of host interferon alpha. Interaction with host TMEM173/STING impairs the ability of TMEM173/STING to sense cytosolic DNA and promote the production of type I interferon (IFN-alpha and IFN-beta). This Human papillomavirus type 34 protein is Protein E7.